The following is an 802-amino-acid chain: MAESCEALGTVPEHERILQEIESTDTACVGPTLRSVYDDQPNAHKKFMEKLDACIRNHDKEIEKMCNFHHQGFVDAITELLKVRADAEKLKVTDTNRRFQDAGKEVIIQTEDIIRCRIQQRNITTVVEKLQLCLPVLEMYSKLKEQMSMKRYYSALKTMEQLENVYFPRVSQYRFCQLMMETLPKLREDMMNYCMSDLTYGLESIRKHSDKIGEAAMKQAQQQKSFSVALQKQNNMRFGKNMHVNNDRILEEKSDVIPKHALEEEAENDEEVLTVQDLVDFSPVYRCLHIYSALGDEETFENYYRKQRKKQARLVLQPQSSVHETVDGYRRYFTQIVGFFVVEDHILHVTQGLVTRVYTEELWNMALSKIIAVLRAHSSYCTDPDLVLELKNLIVIFADTLQGYGFPVNRLFDLLFEIRDQYNETLLKKWAGIFRDIFEEDNYSPIPIGSEEEYKVVISRFPFQDPDLEKQSFPKKFPMSQSVPLIYIQVKEFIYASLKFSESLHRSSTEIDDMLRKSTNLLLTRILSSCLLNLIRKPHIGLTELVQIIINTTHLEQACKYLEDFITNITNISQETVHTTRLYGLSTFKDARHAAEGEIYTKLNQKIDEFVQLADYDWTMAESDGRASGYLMDLINFLRSIFQVFTHLPGKVAQTACMSACQHLSTSLMQMLLDSELKQISMGAVQQFNLDVIQCELFASSEPVPGFQGDTLQLAFIDLRQLLDLFMVWDWSTYLADYGQPASKYLRVNPHAALTLLEKMKDTSKKNNIFAQFRKNDRDRQKLIETVVRQLRGLVTGMSQHT.

This sequence belongs to the SEC15 family. In terms of assembly, the exocyst complex is composed of EXOC1, EXOC2, EXOC3, EXOC4, EXOC5, EXOC6, EXOC7 and EXOC8. Interacts with CNTRL. Interacts with RAB11A in a GTP-dependent manner.

It is found in the cytoplasm. It localises to the perinuclear region. The protein localises to the cell projection. The protein resides in the growth cone. Its subcellular location is the midbody. It is found in the midbody ring. Its function is as follows. Component of the exocyst complex involved in the docking of exocytic vesicles with fusion sites on the plasma membrane. Together with RAB11A, RAB3IP, RAB8A, PARD3, PRKCI, ANXA2, CDC42 and DNMBP promotes transcytosis of PODXL to the apical membrane initiation sites (AMIS), apical surface formation and lumenogenesis. The sequence is that of Exocyst complex component 6 (Exoc6) from Mus musculus (Mouse).